A 268-amino-acid polypeptide reads, in one-letter code: Octanoyltransferase (268 aa).

One can recognise a BPL/LPL catalytic domain in the interval Pro-47–Glu-243. Residues Arg-87–His-94, Ala-159–Gly-161, and Gly-172–Ser-174 each bind substrate. Cys-190 serves as the catalytic Acyl-thioester intermediate.

Belongs to the LipB family.

Its subcellular location is the cytoplasm. The enzyme catalyses octanoyl-[ACP] + L-lysyl-[protein] = N(6)-octanoyl-L-lysyl-[protein] + holo-[ACP] + H(+). The protein operates within protein modification; protein lipoylation via endogenous pathway; protein N(6)-(lipoyl)lysine from octanoyl-[acyl-carrier-protein]: step 1/2. Functionally, catalyzes the transfer of endogenously produced octanoic acid from octanoyl-acyl-carrier-protein onto the lipoyl domains of lipoate-dependent enzymes. Lipoyl-ACP can also act as a substrate although octanoyl-ACP is likely to be the physiological substrate. This chain is Octanoyltransferase, found in Cupriavidus necator (strain ATCC 17699 / DSM 428 / KCTC 22496 / NCIMB 10442 / H16 / Stanier 337) (Ralstonia eutropha).